Here is a 125-residue protein sequence, read N- to C-terminus: UPF0332 protein AF_0298 (125 aa).

The protein belongs to the UPF0332 family.

The chain is UPF0332 protein AF_0298 from Archaeoglobus fulgidus (strain ATCC 49558 / DSM 4304 / JCM 9628 / NBRC 100126 / VC-16).